A 315-amino-acid chain; its full sequence is Taste receptor type 2 member 3 (315 aa).

Residues Met1–Glu5 are Extracellular-facing. Residues Gly6–Ile26 form a helical membrane-spanning segment. Residues Glu27 to Ser41 are Cytoplasmic-facing. A helical transmembrane segment spans residues Leu42 to Leu62. Topologically, residues Thr63–His93 are extracellular. The chain crosses the membrane as a helical span at residues Leu94–Ser114. Topologically, residues His115–Arg127 are cytoplasmic. Residues Val128 to Ile148 form a helical membrane-spanning segment. At Asn149–Thr185 the chain is on the extracellular side. An N-linked (GlcNAc...) asparagine glycan is attached at Asn165. A helical transmembrane segment spans residues Leu186 to Leu206. The Cytoplasmic segment spans residues Gly207–Arg233. Residues Ile234–Phe254 form a helical membrane-spanning segment. Topologically, residues Gly255 to Lys265 are extracellular. A helical transmembrane segment spans residues Met266–Gly286. Residues Asn287–Ser315 lie on the Cytoplasmic side of the membrane.

Belongs to the G-protein coupled receptor T2R family.

It is found in the membrane. Gustducin-coupled receptor implicated in the perception of bitter compounds in the oral cavity and the gastrointestinal tract. Signals through PLCB2 and the calcium-regulated cation channel TRPM5. This Gorilla gorilla gorilla (Western lowland gorilla) protein is Taste receptor type 2 member 3 (TAS2R3).